The chain runs to 647 residues: MPRIPTVELSRYLLTGHIASPGCLRARAALPGKNTRVALGGAPLPSRQLQPRQHARYLTTETSFANPSATTSSPAAAAPFRKQLKEQAKALKKSGHKKKKSSDNQTVPGWELTVGIEIHAQLNTAHKLFSPATTSFNDPPNTHVAPFDLALPGSQPLFQPATLIPAVRAALALNCSIQPVSRFDRKHYFHWDQPSGYQITQFYEPFAKDGFITLYARDGIAAEDGEEIKVGIKQVQMEQDTAKTTAQPGDVQWLDFNRVGVPLIEIITLPEIHHPATAAALVRKVQMVLASVDACVSGLEEGGLRADVNVSVRRTDDPSGKLGTRTEIKNLSSFKAVEDAIIAERDRQIELLEEGGEVKGETRGWSLGSTETRRLRGKEGEVDYRYMPDPDLGPVVIGEDLVARLRETMGVLPDQEADQLMERYNLSAKDALSLMLLDGGARIQYFYNVLDSLEERLVADGQAVPEGAEHATLAANWCLHELGKLTDSASSSSCSDPDVLEGLAMTPLGESPLVPSSSLAAILHHLYSRTITAKVAKDLLWAVYRGEIPEGGTTSYIDTHGLWFKELPEEEYAKLADEVIQGEEKILGEFLRWKQGKMKAYPQGKLMFLVGKMMRGGPEGRVEASGAERVLRRRIEEVYLPELEKGE.

A disordered region spans residues 87-106 (QAKALKKSGHKKKKSSDNQT). Over residues 90 to 100 (ALKKSGHKKKK) the composition is skewed to basic residues.

The protein belongs to the GatB/GatE family. GatB subfamily. As to quaternary structure, subunit of the heterotrimeric GatCAB amidotransferase (AdT) complex, composed of A, B and C subunits.

It localises to the mitochondrion. The enzyme catalyses L-glutamyl-tRNA(Gln) + L-glutamine + ATP + H2O = L-glutaminyl-tRNA(Gln) + L-glutamate + ADP + phosphate + H(+). Allows the formation of correctly charged Gln-tRNA(Gln) through the transamidation of misacylated Glu-tRNA(Gln) in the mitochondria. The reaction takes place in the presence of glutamine and ATP through an activated gamma-phospho-Glu-tRNA(Gln). The polypeptide is Glutamyl-tRNA(Gln) amidotransferase subunit B, mitochondrial (Neurospora crassa (strain ATCC 24698 / 74-OR23-1A / CBS 708.71 / DSM 1257 / FGSC 987)).